The sequence spans 42 residues: Envelope protein P10 (42 aa).

A helical membrane pass occupies residues 20 to 40 (TTAAKIAVVYALVGLVGGLLL).

It is found in the virion membrane. Involved in cell lysis. The protein is Envelope protein P10 (P10) of Pseudomonas savastanoi pv. phaseolicola (Pseudomonas syringae pv. phaseolicola).